The chain runs to 228 residues: Superoxide dismutase [Mn] (228 aa).

The N-terminal stretch at 1–23 (MTRSLKTTLILLASSVISMSALA) is a signal peptide. Mn(2+) contacts are provided by histidine 49, histidine 100, aspartate 188, and histidine 192.

The protein belongs to the iron/manganese superoxide dismutase family. Mn(2+) serves as cofactor.

It localises to the periplasm. It catalyses the reaction 2 superoxide + 2 H(+) = H2O2 + O2. Functionally, destroys superoxide anion radicals which are normally produced within the cells and which are toxic to biological systems. This chain is Superoxide dismutase [Mn] (sodA), found in Acinetobacter baylyi (strain ATCC 33305 / BD413 / ADP1).